A 259-amino-acid polypeptide reads, in one-letter code: Adenosylcobinamide-GDP ribazoletransferase (259 aa).

7 helical membrane passes run 41-61, 67-87, 119-139, 148-168, 179-199, 200-220, and 237-257; these read AAIW…AIVF, FGLA…IATG, IGAY…NVLS, LFAL…FMHL, AGAG…GAIP, LLLL…LLFA, and TIGA…SVAL.

The protein belongs to the CobS family. It depends on Mg(2+) as a cofactor.

The protein resides in the cell inner membrane. The enzyme catalyses alpha-ribazole + adenosylcob(III)inamide-GDP = adenosylcob(III)alamin + GMP + H(+). The catalysed reaction is alpha-ribazole 5'-phosphate + adenosylcob(III)inamide-GDP = adenosylcob(III)alamin 5'-phosphate + GMP + H(+). Its pathway is cofactor biosynthesis; adenosylcobalamin biosynthesis; adenosylcobalamin from cob(II)yrinate a,c-diamide: step 7/7. Joins adenosylcobinamide-GDP and alpha-ribazole to generate adenosylcobalamin (Ado-cobalamin). Also synthesizes adenosylcobalamin 5'-phosphate from adenosylcobinamide-GDP and alpha-ribazole 5'-phosphate. The sequence is that of Adenosylcobinamide-GDP ribazoletransferase from Mesorhizobium japonicum (strain LMG 29417 / CECT 9101 / MAFF 303099) (Mesorhizobium loti (strain MAFF 303099)).